The sequence spans 356 residues: D-alanine--D-alanine ligase (356 aa).

The ATP-grasp domain maps to 134–339 (KQLFEHRGLP…YPELITKLIE (206 aa)). ATP is bound at residue 167–222 (NDKLNYPVFVKPANLGSSVGISKCNNEAELKEGIKEAFQFDRKLVIEQGVNAREIE). Mg(2+) contacts are provided by aspartate 293, glutamate 306, and asparagine 308.

Belongs to the D-alanine--D-alanine ligase family. The cofactor is Mg(2+). Mn(2+) serves as cofactor.

The protein resides in the cytoplasm. The enzyme catalyses 2 D-alanine + ATP = D-alanyl-D-alanine + ADP + phosphate + H(+). It participates in cell wall biogenesis; peptidoglycan biosynthesis. Functionally, cell wall formation. In Staphylococcus aureus (strain MSSA476), this protein is D-alanine--D-alanine ligase.